We begin with the raw amino-acid sequence, 313 residues long: Cilia- and flagella-associated protein 36 (313 aa).

Residues Ser85 and Ser147 each carry the phosphoserine modification. Residues 147 to 187 (SDLEQEEMKILKEVLRKSKEEYDQEEERKRKKQLSEAKTEE) adopt a coiled-coil conformation. 2 disordered regions span residues 165-204 (KEEYDQEEERKRKKQLSEAKTEEHPMQANETAKMSNSQGD) and 262-292 (KIKQNQTSEQKGKPAGEVEEMTEKPEMTAEE). Over residues 179–189 (QLSEAKTEEHP) the composition is skewed to basic and acidic residues. Positions 192–203 (ANETAKMSNSQG) are enriched in polar residues. Ser201 is subject to Phosphoserine. A compositionally biased stretch (basic and acidic residues) spans 271 to 292 (QKGKPAGEVEEMTEKPEMTAEE).

The protein belongs to the CFAP36 family. In terms of assembly, interacts with ARL3.

The protein resides in the nucleus. It is found in the cytoplasm. The protein localises to the cell projection. Its subcellular location is the cilium. It localises to the flagellum. In terms of biological role, may act as an effector for ARL3. This is Cilia- and flagella-associated protein 36 from Bos taurus (Bovine).